A 160-amino-acid polypeptide reads, in one-letter code: Small ribosomal subunit protein uS10m (160 aa).

This sequence belongs to the universal ribosomal protein uS10 family. Component of the mitochondrial ribosome small subunit (28S) which comprises a 12S rRNA and about 30 distinct proteins.

Its subcellular location is the mitochondrion. In Mus musculus (Mouse), this protein is Small ribosomal subunit protein uS10m (Mrps10).